The primary structure comprises 245 residues: Small ribosomal subunit protein uS2 (245 aa).

This sequence belongs to the universal ribosomal protein uS2 family.

The chain is Small ribosomal subunit protein uS2 from Pseudomonas putida (strain GB-1).